The following is a 446-amino-acid chain: UDP-N-acetylmuramoylalanine--D-glutamate ligase (446 aa).

Residue 118–124 coordinates ATP; sequence GSNGKST.

This sequence belongs to the MurCDEF family.

Its subcellular location is the cytoplasm. It carries out the reaction UDP-N-acetyl-alpha-D-muramoyl-L-alanine + D-glutamate + ATP = UDP-N-acetyl-alpha-D-muramoyl-L-alanyl-D-glutamate + ADP + phosphate + H(+). The protein operates within cell wall biogenesis; peptidoglycan biosynthesis. Its function is as follows. Cell wall formation. Catalyzes the addition of glutamate to the nucleotide precursor UDP-N-acetylmuramoyl-L-alanine (UMA). This chain is UDP-N-acetylmuramoylalanine--D-glutamate ligase, found in Pseudoalteromonas translucida (strain TAC 125).